The primary structure comprises 185 residues: MARLLFRLLQEANSTSPAEASPPFNSDLVLILAVLLCALTCIIGLIAVSRCAWLRRIASRNRSDQTHPPPVAAANKGLKKKVLRSLPKLTYSPDSPPAEKLVECAICLTEFAAGDELRVLPQCGHGFHVSCIDTWLGSHSSCPSCRQILVVTRCHKCGGLPGSSSSGPEPDTRIKQREDGPDNLP.

Residues 28-48 form a helical membrane-spanning segment; it reads LVLILAVLLCALTCIIGLIAV. Residues 104–146 form an RING-type; atypical zinc finger; sequence CAICLTEFAAGDELRVLPQCGHGFHVSCIDTWLGSHSSCPSCR. Residues 161–185 are disordered; sequence PGSSSSGPEPDTRIKQREDGPDNLP. Basic and acidic residues predominate over residues 170–185; it reads PDTRIKQREDGPDNLP.

The protein belongs to the RING-type zinc finger family. ATL subfamily.

The protein localises to the membrane. It catalyses the reaction S-ubiquitinyl-[E2 ubiquitin-conjugating enzyme]-L-cysteine + [acceptor protein]-L-lysine = [E2 ubiquitin-conjugating enzyme]-L-cysteine + N(6)-ubiquitinyl-[acceptor protein]-L-lysine.. It participates in protein modification; protein ubiquitination. The polypeptide is RING-H2 finger protein ATL8 (ATL8) (Arabidopsis thaliana (Mouse-ear cress)).